The sequence spans 108 residues: Peptidyl-prolyl cis-trans isomerase FKBP1C (108 aa).

The PPIase FKBP-type domain maps to 20–108 (SQTCVMHYTG…VFDVELLKLE (89 aa)).

This sequence belongs to the FKBP-type PPIase family. FKBP1 subfamily.

The enzyme catalyses [protein]-peptidylproline (omega=180) = [protein]-peptidylproline (omega=0). Its function is as follows. Catalyzes the cis-trans isomerization of proline imidic peptide bonds in oligopeptides. The polypeptide is Peptidyl-prolyl cis-trans isomerase FKBP1C (Homo sapiens (Human)).